A 134-amino-acid polypeptide reads, in one-letter code: Profilin-3 (134 aa).

A disulfide bond links Cys-13 and Cys-118. The short motif at 84–100 (AVIRGKKGSGGITIKKT) is the Involved in PIP2 interaction element. A Phosphothreonine modification is found at Thr-114.

Belongs to the profilin family. Occurs in many kinds of cells as a complex with monomeric actin in a 1:1 ratio. Post-translationally, phosphorylated by MAP kinases.

It localises to the cytoplasm. The protein resides in the cytoskeleton. Binds to actin and affects the structure of the cytoskeleton. At high concentrations, profilin prevents the polymerization of actin, whereas it enhances it at low concentrations. The protein is Profilin-3 of Olea europaea (Common olive).